Here is a 59-residue protein sequence, read N- to C-terminus: Prokaryotic ubiquitin-like protein UBact (59 aa).

The tract at residues 1-59 (MEMTDPLRREEKKESSPDPKEESGPSRPDVSRPGRDSLLKRMKKVDPKQSEKYKQRTGQ) is disordered. Q59 is subject to Deamidated glutamine. An Isoglutamyl lysine isopeptide (Gln-Lys) (interchain with K-? in acceptor proteins) cross-link involves residue Q59.

It belongs to the ubiquitin-like protein UBact family. Post-translationally, may be modified by deamidation of its C-terminal glutamine to glutamate by the adjacently encoded deamidase. This could be a prerequisite to the subsequent conjugation, as shown in the other prokaryotic ubiquitin-like protein Pup.

May function as a protein modifier covalently attached to lysine residues of substrate proteins. This may serve to target the modified proteins for degradation by proteasomes. The polypeptide is Prokaryotic ubiquitin-like protein UBact (Nitrospina gracilis (strain 3/211)).